Consider the following 1159-residue polypeptide: PAN2-PAN3 deadenylation complex catalytic subunit pan2 (1159 aa).

The WD repeat unit spans residues 276 to 315 (ANVSFMLGIDISPSGEALAINDAECMVHLWGSPAKIHFNE). The segment at 316 to 451 (MSKEVELADV…GAKLNGEAED (136 aa)) is linker. The USP domain maps to 452–821 (DPLLKYSNVE…VPCVLAFQVK (370 aa)). The 177-residue stretch at 872-1048 (LDTEFVDLEK…IEDARMALRL (177 aa)) folds into the Exonuclease domain. 4 residues coordinate a divalent metal cation: D873, E875, D982, and D1041. The segment at 1094–1159 (TAVTMQNTNS…GDFFGGSPLK (66 aa)) is disordered. The span at 1096–1106 (VTMQNTNSGRN) shows a compositional bias: polar residues. Residues 1107 to 1128 (TPTVPDAAGAPAVPASAPTTPG) show a composition bias toward low complexity. Residues 1143 to 1153 (TFSGPGAGDFF) show a composition bias toward gly residues.

Belongs to the peptidase C19 family. PAN2 subfamily. As to quaternary structure, forms a heterotrimer with an asymmetric homodimer of the regulatory subunit pan3 to form the poly(A)-nuclease (PAN) deadenylation complex. A divalent metal cation is required as a cofactor.

The protein resides in the cytoplasm. The enzyme catalyses Exonucleolytic cleavage of poly(A) to 5'-AMP.. With respect to regulation, positively regulated by the regulatory subunit pan3. Its function is as follows. Catalytic subunit of the poly(A)-nuclease (PAN) deadenylation complex, one of two cytoplasmic mRNA deadenylases involved in mRNA turnover. PAN specifically shortens poly(A) tails of RNA and the activity is stimulated by poly(A)-binding protein pab1. PAN deadenylation is followed by rapid degradation of the shortened mRNA tails by the CCR4-NOT complex. Deadenylated mRNAs are then degraded by two alternative mechanisms, namely exosome-mediated 3'-5' exonucleolytic degradation, or deadenylation-dependent mRNA decaping and subsequent 5'-3' exonucleolytic degradation by xrn1. May also be involved in post-transcriptional maturation of mRNA poly(A) tails. The sequence is that of PAN2-PAN3 deadenylation complex catalytic subunit pan2 from Aspergillus terreus (strain NIH 2624 / FGSC A1156).